Reading from the N-terminus, the 1496-residue chain is Synaptojanin-2 (1496 aa).

The SAC domain occupies 120–444 (LKKILSSGVF…GHGLSKVFTG (325 aa)). Positions 906–985 (DATVIVNLQS…RAVKIRPKTK (80 aa)) constitute an RRM domain. 6 disordered regions span residues 1047-1083 (VVSD…HPTY), 1100-1149 (GNFR…GTHG), 1205-1357 (VPES…LQVL), 1393-1413 (SSAI…AASF), 1442-1461 (EPLD…SAQV), and 1468-1496 (RGLP…TLGV). Positions 1063–1074 (SASTPASKSPAL) are enriched in low complexity. Residues 1116 to 1130 (RPRPPHPPQRPPPPT) are compositionally biased toward pro residues. S1139 carries the phosphoserine modification. Polar residues predominate over residues 1139–1149 (SDASISSGTHG). Pro residues-rich tracts occupy residues 1230-1239 (PVLPRRPVPR) and 1279-1292 (TPPP…PVPK). Low complexity predominate over residues 1324–1338 (ELSSPEAPEAPSLAP). Composition is skewed to basic and acidic residues over residues 1470–1480 (LPPDHGGKDFS) and 1487–1496 (NKDKRTTLGV).

It belongs to the synaptojanin family. This sequence in the central section; belongs to the inositol 1,4,5-trisphosphate 5-phosphatase family. Binds to GRB2. Isoform 2A binds to SYNJ2BP/OMP25. In terms of tissue distribution, widely expressed. Isoforms 2B1 and 2B2 are concentrated at nerve terminals in brain and at spermatid manchette in testis.

Its subcellular location is the cytoplasm. It is found in the cell membrane. The protein localises to the presynapse. It localises to the cytoskeleton. The protein resides in the membrane raft. Its subcellular location is the mitochondrion. It catalyses the reaction a 1,2-diacyl-sn-glycero-3-phospho-(1D-myo-inositol-4,5-bisphosphate) + H2O = a 1,2-diacyl-sn-glycero-3-phospho-(1D-myo-inositol 4-phosphate) + phosphate. In terms of biological role, inositol 5-phosphatase which may be involved in distinct membrane trafficking and signal transduction pathways. May mediate the inhibitory effect of Rac1 on endocytosis. The polypeptide is Synaptojanin-2 (Synj2) (Rattus norvegicus (Rat)).